We begin with the raw amino-acid sequence, 715 residues long: Putative membrane protein IgaA homolog (715 aa).

The next 5 membrane-spanning stretches (helical) occupy residues 2–22 (STIV…GLLW), 214–234 (EACA…GPTV), 235–255 (TLPW…WYLF), 349–369 (NLTL…YVPL), and 663–683 (ATSL…VLLI).

It belongs to the IgaA family.

It is found in the cell inner membrane. The polypeptide is Putative membrane protein IgaA homolog (Yersinia pestis).